A 332-amino-acid polypeptide reads, in one-letter code: Glycerol-3-phosphate dehydrogenase [NAD(P)+] (332 aa).

Tryptophan 11, arginine 30, and lysine 108 together coordinate NADPH. Sn-glycerol 3-phosphate is bound by residues lysine 108, glycine 137, and serine 139. NADPH is bound at residue alanine 141. Lysine 192, aspartate 245, serine 255, arginine 256, and asparagine 257 together coordinate sn-glycerol 3-phosphate. Lysine 192 serves as the catalytic Proton acceptor. Residue arginine 256 participates in NADPH binding. Residues valine 280 and glutamate 282 each contribute to the NADPH site.

It belongs to the NAD-dependent glycerol-3-phosphate dehydrogenase family.

Its subcellular location is the cytoplasm. The catalysed reaction is sn-glycerol 3-phosphate + NAD(+) = dihydroxyacetone phosphate + NADH + H(+). It catalyses the reaction sn-glycerol 3-phosphate + NADP(+) = dihydroxyacetone phosphate + NADPH + H(+). Its pathway is membrane lipid metabolism; glycerophospholipid metabolism. Functionally, catalyzes the reduction of the glycolytic intermediate dihydroxyacetone phosphate (DHAP) to sn-glycerol 3-phosphate (G3P), the key precursor for phospholipid synthesis. The polypeptide is Glycerol-3-phosphate dehydrogenase [NAD(P)+] (Burkholderia cenocepacia (strain HI2424)).